The sequence spans 485 residues: NADH-quinone oxidoreductase subunit N (485 aa).

Helical transmembrane passes span 8–28 (LIALLPLLIVGLTVVVVMLCI), 35–55 (FINSTLTVIGINLALLSLWFV), 75–95 (FYTGLVLVASLATSTLAYAWL), 105–125 (FYLLVLIATMGGILLASANHL), 127–147 (ALFLGIELISLPLFGMVGYAF), 159–179 (YTLLSAAAASFLLFGMALVYA), 203–223 (LLAGLGMMVVGLGFKLSLVPF), 235–255 (PVPVSTFLATASKIAIFAVVM), 271–291 (LVLAIIAFASMLFGNLMALSQ), 303–323 (IAHLGYLLVGLIVVQAHTLAL), 326–346 (VGVYLAGYLFASLGAFGVVSL), 371–393 (LLSSVLTVMMLSLAGIPMTLGFI), 406–426 (HLGWLTGAVVAGSAIGLFYYL), and 449–469 (ALTAGGVVVLISSLLVLLLGL).

This sequence belongs to the complex I subunit 2 family. In terms of assembly, NDH-1 is composed of 13 different subunits. Subunits NuoA, H, J, K, L, M, N constitute the membrane sector of the complex.

It localises to the cell inner membrane. The catalysed reaction is a quinone + NADH + 5 H(+)(in) = a quinol + NAD(+) + 4 H(+)(out). Its function is as follows. NDH-1 shuttles electrons from NADH, via FMN and iron-sulfur (Fe-S) centers, to quinones in the respiratory chain. The immediate electron acceptor for the enzyme in this species is believed to be ubiquinone. Couples the redox reaction to proton translocation (for every two electrons transferred, four hydrogen ions are translocated across the cytoplasmic membrane), and thus conserves the redox energy in a proton gradient. The polypeptide is NADH-quinone oxidoreductase subunit N (Sodalis glossinidius (strain morsitans)).